Here is a 590-residue protein sequence, read N- to C-terminus: L-asparaginase (590 aa).

Positions 6–357 (AHVLVLYTGG…VEKKAMMVKN (352 aa)) constitute an Asparaginase/glutaminase domain. The active-site O-isoaspartyl threonine intermediate is the Thr-16. Residues 44 to 351 (NDDDYVSTYY…KDCWELVEKK (308 aa)) form an asparaginase region. Substrate-binding positions include 85–87 (DSS) and 117–118 (TD). 4 ANK repeats span residues 398-427 (IFPQ…DLSV), 431-460 (NGRN…SFHL), 497-526 (RLGV…DINQ), and 530-559 (NGET…DPYK).

In the N-terminal section; belongs to the asparaginase 1 family. May be present in the larval cuticle.

The enzyme catalyses L-asparagine + H2O = L-aspartate + NH4(+). The chain is L-asparaginase from Dirofilaria immitis (Canine heartworm).